The primary structure comprises 405 residues: Scramblase ANY1 (405 aa).

Residues 1-51 (MSTTGPLDATLIRDVAVATATKASYDMSDTLYSYLPKVDQFYIPEWLTMQF) lie on the Cytoplasmic side of the membrane. The chain crosses the membrane as a helical span at residues 52–72 (IANNLISFTPLFSYGTTIISI). The Lumenal segment spans residues 73-76 (EKCK). The helical transmembrane segment at 77–97 (TALGFSIDICATMLIASILRI) threads the bilayer. Topologically, residues 98–103 (SYYLIT) are cytoplasmic. Residues 104–124 (PYEITLLRQSLVMIFIQLILL) form a helical membrane-spanning segment. The Lumenal portion of the chain corresponds to 125 to 177 (RTSLKYRPDEYKYQNLTDVESLSHLIHDIWFEFFSCINRPKFLSEDWKNLIKS). A helical membrane pass occupies residues 178 to 198 (LSFTNLLKFSFKIFLAFFYKI). Topologically, residues 199–223 (LKFFDPNFKRIGAFWQWDDDKNFWR) are cytoplasmic. Residues 224 to 244 (FLALFATVQILVTFFISNILN) form a helical membrane-spanning segment. The Lumenal segment spans residues 245–254 (WDSLAQGLGS). The 58-residue stretch at 252-309 (LGSIIGSLGLLVESLLPLPQIAILYKLKSVQGFKLILLVSWLCGDTLKITYLIFGAKN) folds into the PQ-loop domain. Residues 255–275 (IIGSLGLLVESLLPLPQIAIL) traverse the membrane as a helical segment. Residues 276-283 (YKLKSVQG) are Cytoplasmic-facing. A helical membrane pass occupies residues 284–306 (FKLILLVSWLCGDTLKITYLIFG). At 307 to 312 (AKNISA) the chain is on the lumenal side. Residues 313–335 (LFVIFALFQMSLDFYIGGQYIYY) form a helical membrane-spanning segment. Residues 336-405 (RYYYPKLRHQ…GKSQAQAVTL (70 aa)) are Cytoplasmic-facing. The disordered stretch occupies residues 379 to 405 (LKQDSNDTSDSPQDDQVGKSQAQAVTL). The segment covering 396-405 (GKSQAQAVTL) has biased composition (polar residues).

Interacts with NEO1.

It is found in the golgi apparatus membrane. The protein localises to the late endosome membrane. Phospholipid scramblase that transports phosphatidylserine (PS) and phosphatidylethalonamine (PE) bidirectionally from one leaflet to the other of the phospholipid bilayer to at least partially collapse the membrane asymmetry established by NEO1 and other flippases. The PS scramblase activity has been disputed. Functions in the trafficking pathway from endosomes to the trans-Golgi network (TGN). The protein is Scramblase ANY1 of Saccharomyces cerevisiae (strain ATCC 204508 / S288c) (Baker's yeast).